The primary structure comprises 296 residues: Bifunctional protein FolD (296 aa).

NADP(+)-binding positions include Gly166–Ser168, Ser191, and Ile232.

Belongs to the tetrahydrofolate dehydrogenase/cyclohydrolase family. As to quaternary structure, homodimer.

The catalysed reaction is (6R)-5,10-methylene-5,6,7,8-tetrahydrofolate + NADP(+) = (6R)-5,10-methenyltetrahydrofolate + NADPH. The enzyme catalyses (6R)-5,10-methenyltetrahydrofolate + H2O = (6R)-10-formyltetrahydrofolate + H(+). Its pathway is one-carbon metabolism; tetrahydrofolate interconversion. Catalyzes the oxidation of 5,10-methylenetetrahydrofolate to 5,10-methenyltetrahydrofolate and then the hydrolysis of 5,10-methenyltetrahydrofolate to 10-formyltetrahydrofolate. The sequence is that of Bifunctional protein FolD from Cereibacter sphaeroides (strain ATCC 17025 / ATH 2.4.3) (Rhodobacter sphaeroides).